We begin with the raw amino-acid sequence, 466 residues long: Ras GTPase-activating protein-binding protein 1 (466 aa).

The NTF2 domain occupies valine 11 to tyrosine 133. Residues lysine 36, lysine 50, lysine 59, lysine 64, lysine 76, and lysine 123 each participate in a glycyl lysine isopeptide (Lys-Gly) (interchain with G-Cter in ubiquitin) cross-link. The segment at valine 142–glutamate 225 is acidic disordered region. A Phosphothreonine modification is found at threonine 143. Disordered regions lie at residues glutamate 144–threonine 172 and glutamate 184–glutamine 243. Composition is skewed to acidic residues over residues proline 145 to glutamate 157 and glutamate 185 to proline 206. Serine 149 is modified (phosphoserine). Serine 231, serine 232, serine 250, and serine 253 each carry phosphoserine. Residues threonine 255 to glutamate 329 form a disordered region. Composition is skewed to basic and acidic residues over residues proline 297–arginine 307 and proline 318–glutamate 329. Positions histidine 340–threonine 415 constitute an RRM domain. Glycyl lysine isopeptide (Lys-Gly) (interchain with G-Cter in ubiquitin) cross-links involve residues lysine 353 and lysine 357. The residue at position 373 (serine 373) is a Phosphoserine. Lysine 376 participates in a covalent cross-link: Glycyl lysine isopeptide (Lys-Gly) (interchain with G-Cter in ubiquitin). Lysine 376 is modified (N6-acetyllysine; alternate). Residue lysine 376 forms a Glycyl lysine isopeptide (Lys-Gly) (interchain with G-Cter in SUMO2); alternate linkage. A Glycyl lysine isopeptide (Lys-Gly) (interchain with G-Cter in ubiquitin); alternate cross-link involves residue lysine 393. Residues valine 410–glutamine 466 form an RG-rich region region. The segment covering lysine 413–leucine 428 has biased composition (basic and acidic residues). Residues lysine 413–glutamine 466 form a disordered region. The residue at position 429 (arginine 429) is an Asymmetric dimethylarginine. Positions glycine 430 to arginine 447 are enriched in gly residues. Arginine 435 carries the asymmetric dimethylarginine; alternate modification. A Dimethylated arginine; alternate modification is found at arginine 435. Omega-N-methylarginine; alternate is present on arginine 435. At arginine 447 the chain carries Omega-N-methylarginine. The residue at position 460 (arginine 460) is a Dimethylated arginine; alternate. Arginine 460 carries the omega-N-methylarginine; alternate modification. Arginine 465 bears the Omega-N-methylarginine mark.

In terms of assembly, homodimer and oligomer. Component of a TAU mRNP complex, at least composed of IGF2BP1, ELAVL4 and G3BP1. Binds to the SH3 domain of Ras GTPase-activating protein (RASA1) in proliferating cells. No interaction in quiescent cells. Interacts (via NTF2 domain) with USP10; inhibiting stress granule formation by lowering G3BP1 valence. Interacts (via NTF2 domain) with CAPRIN1; promoting stress granule formation by lowering the saturation-concentration of G3BP1. Interacts (via NTF2 domain) with UBAP2L; promoting stress granule formation. Associates (via RG-rich region) with 40S ribosome subunits. Interacts with RPTOR and SPAG5; this complex is increased by oxidative stress. Interacts with ATXN2L. Interacts with STYXL1. Interacts with CGAS (via N-terminus); this interaction promotes the DNA-binding and activation of CGAS. Interacts (via C-terminus) with RIGI. Interacts with PABPC1. Interacts with QKI (isoforms QKI6 and QKI7); directing N(7)-methylguanine-containing mRNAs to stress granules. (Microbial infection) Interacts with Semliki forest virus non-structural protein 3 (via C-terminus); this interaction inhibits the formation of stress granules on viral mRNAs and the nsp3-G3BP1 complexes bind viral RNAs and probably orchestrate the assembly of viral replication complexes. As to quaternary structure, (Microbial infection) Interacts with Chikungunya virus non-structural protein 3 (via C-terminus); this interaction inhibits the formation of stress granules on viral mRNAs and the nsp3-G3BP1 complexes bind viral RNAs and probably orchestrate the assembly of viral replication complexes. In terms of assembly, (Microbial infection) Interacts with Sindbis virus non-structural protein 3 (via C-terminus); this interaction inhibits the formation of stress granules on viral mRNAs and the nsp3-G3BP1 complexes bind viral RNAs and probably orchestrate the assembly of viral replication complexes. (Microbial infection) Interacts with Zika virus capsid protein C; this interaction is probably linked to the inhibition of stress granules formation by the virus. As to quaternary structure, (Microbial infection) Interacts with reovirus type 2 protein sigma-NS; this interaction induces the relocalization of G3BP1 to the outer periphery of sigma-NS/mu-Ns viral factories and is probably involved in the suppression of the integrated stress response by the virus. In terms of assembly, (Microbial infection) Interacts with SARS-CoV-2 N protein; the interaction is enhanced by host HDAC6 which deacetylates the viral N protein and promotes N protein association with G3BP1, disrupting stress granule formation and facilitating viral replication. Interacts with HDAC6; the interaction increases during SARS-CoV-2 infection. The cofactor is Mg(2+). In terms of processing, phosphorylation of the acidic disordered region regulates stress granule assembly. RASA1-dependent phosphorylation of Ser-149 induces a conformational change that prevents self-association. Dephosphorylation after HRAS activation is required for stress granule assembly. Ser-149 phosphorylation induces partial nuclear localization. Ubiquitinated by TRIM21 via 'Lys-63'-linked polyubiquitination in the NTF2 domain in response to heat shock, leading to stress granule disassembly: ubiquitination promotes interaction with the FAF2 adapter, followed by interaction with VCP, which extracts G3BP1 from stress granules, leading to stress granule disassembly. In case of prolonged stress, ubiquitination by TRIM21 leads to autophagy-dependent degradation of G3BP1 via recruitment of ubiquitinated G3BP1 by SQSTM1 and/or CALCOCO2 to autophagosomes. Post-translationally, (Microbial infection) Cleaved by human enterovirus 71; this cleavage induces the disassembly of cytoplasmic stress granules. Cleaved by Foot-and-mouth disease virus; this cleavage suppresses the formation of cytoplasmic stress granules. In terms of processing, arg-435 is dimethylated, probably to asymmetric dimethylarginine. (Microbial infection) Cleaved by Encephalomyocarditis virus protease 3C; this cleavage suppresses the formation of cytoplasmic stress granules. In terms of tissue distribution, ubiquitous.

Its subcellular location is the cytoplasm. It localises to the cytosol. The protein localises to the perikaryon. The protein resides in the stress granule. It is found in the nucleus. It carries out the reaction ATP + H2O = ADP + phosphate + H(+). With respect to regulation, under physiological conditions, G3BP1 adopts a compact state that is stabilized by intramolecular interactions between the RG-rich and the acidic regions that inhibit phase separation. Upon stress, polysomes disassemble and mRNAs are released in an unfolded protein-free state. Binding of unfolded mRNA to G3BP1 outcompetes the intramolecular interactions and RNA-bound G3BP1 adopts an expanded conformation in which the RG-rich region becomes exposed to engage in protein-protein and protein-RNA interactions, allowing physical cross-linking of RNA molecules to form protein-RNA condensates, leading to liquid-liquid phase separation (LLPS). Functionally, protein involved in various processes, such as stress granule formation and innate immunity. Plays an essential role in stress granule formation. Stress granules are membraneless compartments that store mRNAs and proteins, such as stalled translation pre-initiation complexes, in response to stress. Promotes formation of stress granules phase-separated membraneless compartment by undergoing liquid-liquid phase separation (LLPS) upon unfolded RNA-binding: functions as a molecular switch that triggers RNA-dependent LLPS in response to a rise in intracellular free RNA concentrations. Also acts as an ATP- and magnesium-dependent helicase: unwinds DNA/DNA, RNA/DNA, and RNA/RNA substrates with comparable efficiency. Acts unidirectionally by moving in the 5' to 3' direction along the bound single-stranded DNA. Unwinds preferentially partial DNA and RNA duplexes having a 17 bp annealed portion and either a hanging 3' tail or hanging tails at both 5'- and 3'-ends. Plays an essential role in innate immunity by promoting CGAS and RIGI activity. Participates in the DNA-triggered cGAS/STING pathway by promoting the DNA binding and activation of CGAS. Triggers the condensation of cGAS, a process probably linked to the formation of membrane-less organelles. Also enhances RIGI-induced type I interferon production probably by helping RIGI at sensing pathogenic RNA. May also act as a phosphorylation-dependent sequence-specific endoribonuclease in vitro: Cleaves exclusively between cytosine and adenine and cleaves MYC mRNA preferentially at the 3'-UTR. The protein is Ras GTPase-activating protein-binding protein 1 of Homo sapiens (Human).